Reading from the N-terminus, the 389-residue chain is Multidrug resistance protein 1 (389 aa).

11 helical membrane-spanning segments follow: residues 6-26, 42-62, 71-91, 102-122, 134-154, 160-180, 202-222, 243-263, 286-306, 336-356, and 358-378; these read ITLT…GLVI, AVGY…PIAG, KIMI…FGIG, MLGG…IADI, YMSA…GFLA, LPFF…ILTL, IFAP…FGLA, IAIM…VLFD, VFLL…VTVF, SMFT…LFDI, and VNYP…LTIA.

Belongs to the major facilitator superfamily. TCR/Tet family.

The protein localises to the cell membrane. In terms of biological role, energy-dependent efflux pump responsible for decreased drug accumulation in multi-drug-resistant cells. Probably uses a transmembrane proton gradient as the energy source. Causes the efflux of a variety of toxic substances, including such structurally diverse compounds as ethidium bromide, rhodamine and acridine dyes, tetraphenylphosphonium, puromycin, chloramphenicol, doxorubicin, and fluoroquinolone antibiotics. This chain is Multidrug resistance protein 1 (bmr), found in Bacillus subtilis (strain 168).